A 148-amino-acid polypeptide reads, in one-letter code: Large ribosomal subunit protein bL9 (148 aa).

The protein belongs to the bacterial ribosomal protein bL9 family.

Binds to the 23S rRNA. In Marinobacter nauticus (strain ATCC 700491 / DSM 11845 / VT8) (Marinobacter aquaeolei), this protein is Large ribosomal subunit protein bL9.